Here is a 112-residue protein sequence, read N- to C-terminus: Gastrula zinc finger protein XlCGF9.1 (112 aa).

C2H2-type zinc fingers lie at residues 6–28 (FICS…MKIH), 34–56 (FCCP…ERTH), 62–84 (FTCP…RIIH), and 90–112 (YSCP…FKIH).

It belongs to the krueppel C2H2-type zinc-finger protein family.

The protein resides in the nucleus. Its function is as follows. May be involved in transcriptional regulation. The protein is Gastrula zinc finger protein XlCGF9.1 of Xenopus laevis (African clawed frog).